The primary structure comprises 360 residues: Glutaminyl-peptide cyclotransferase (360 aa).

Positions 1 to 23 (MKYLKILIIVTIFFFLLINVINC) are cleaved as a signal peptide. Residue Asn-135 is glycosylated (N-linked (GlcNAc...) asparagine). Residue Asp-165 participates in Zn(2+) binding. Glu-199 functions as the Proton acceptor in the catalytic mechanism. Glu-200 contributes to the Zn(2+) binding site. The active-site Proton acceptor is the Asp-251. His-330 contacts Zn(2+).

This sequence belongs to the glutaminyl-peptide cyclotransferase family.

It is found in the secreted. It catalyses the reaction N-terminal L-glutaminyl-[peptide] = N-terminal 5-oxo-L-prolyl-[peptide] + NH4(+). Responsible for the biosynthesis of pyroglutamyl peptides. Has a bias against acidic and tryptophan residues adjacent to the N-terminal glutaminyl residue and a lack of importance of chain length after the second residue. Also catalyzes N-terminal pyroglutamate formation. The protein is Glutaminyl-peptide cyclotransferase (qpct) of Dictyostelium discoideum (Social amoeba).